We begin with the raw amino-acid sequence, 291 residues long: Protease HtpX (291 aa).

2 consecutive transmembrane segments (helical) span residues 4 to 24 (VLLFLATNLAVMLVLSIVLSV) and 37 to 57 (GGLLLMAAVFGFGGSIISLLM). A Zn(2+)-binding site is contributed by His143. Glu144 is an active-site residue. Residue His147 coordinates Zn(2+). Transmembrane regions (helical) follow at residues 158-178 (LIQGVVNTFVIYISRVLAGIV) and 198-218 (FAISMVFELIFGILASTIVMW). Position 224 (Glu224) interacts with Zn(2+).

The protein belongs to the peptidase M48B family. The cofactor is Zn(2+).

It is found in the cell inner membrane. The polypeptide is Protease HtpX (Tolumonas auensis (strain DSM 9187 / NBRC 110442 / TA 4)).